A 172-amino-acid chain; its full sequence is RNA silencing suppressor p19 (172 aa).

Positions 1-20 are enriched in basic and acidic residues; sequence MERAIQGNDAREQANSERWD. Residues 1–37 are disordered; the sequence is MERAIQGNDAREQANSERWDGGSGGTTSPFKLPDESP.

Belongs to the tombusvirus protein p19 family. Homodimer.

Functionally, viral suppressor of RNA silencing which binds specifically to silencing RNAs (siRNAs). Acts as a molecular caliper to specifically select siRNAs based on the length of the duplex region of the RNA. The polypeptide is RNA silencing suppressor p19 (Tomato bushy stunt virus (strain Ja6) (TBSV)).